Reading from the N-terminus, the 250-residue chain is PF03932 family protein CutC (250 aa).

The protein belongs to the CutC family.

The protein resides in the cytoplasm. The protein is PF03932 family protein CutC of Proteus mirabilis (strain HI4320).